The primary structure comprises 423 residues: Adenylosuccinate synthetase (423 aa).

Residues 11-17 (GDEGKGK) and 39-41 (GHT) contribute to the GTP site. The Proton acceptor role is filled by Asp12. Positions 12 and 39 each coordinate Mg(2+). IMP is bound by residues 12–15 (DEGK), 37–40 (NAGH), Thr127, Arg141, Gln223, Thr238, and Arg302. His40 serves as the catalytic Proton donor. 298-304 (TTTGRSR) contributes to the substrate binding site. GTP is bound by residues Arg304, 330 to 332 (KLD), and 412 to 414 (SVG).

It belongs to the adenylosuccinate synthetase family. In terms of assembly, homodimer. The cofactor is Mg(2+).

It is found in the cytoplasm. It carries out the reaction IMP + L-aspartate + GTP = N(6)-(1,2-dicarboxyethyl)-AMP + GDP + phosphate + 2 H(+). It participates in purine metabolism; AMP biosynthesis via de novo pathway; AMP from IMP: step 1/2. Functionally, plays an important role in the de novo pathway of purine nucleotide biosynthesis. Catalyzes the first committed step in the biosynthesis of AMP from IMP. The protein is Adenylosuccinate synthetase of Methanococcoides burtonii (strain DSM 6242 / NBRC 107633 / OCM 468 / ACE-M).